The following is a 580-amino-acid chain: Arginine--tRNA ligase (580 aa).

Positions Ala137–His147 match the 'HIGH' region motif.

It belongs to the class-I aminoacyl-tRNA synthetase family. As to quaternary structure, monomer.

Its subcellular location is the cytoplasm. It carries out the reaction tRNA(Arg) + L-arginine + ATP = L-arginyl-tRNA(Arg) + AMP + diphosphate. This is Arginine--tRNA ligase from Anaplasma phagocytophilum (strain HZ).